The primary structure comprises 454 residues: PC-esterase domain-containing protein 1A (454 aa).

The protein belongs to the PC-esterase family.

This chain is PC-esterase domain-containing protein 1A (PCED1A), found in Homo sapiens (Human).